We begin with the raw amino-acid sequence, 136 residues long: Small ribosomal subunit protein uS11c (136 aa).

The disordered stretch occupies residues 1–22 (MAKAIPKKGSRGRIGSRKSTRK).

This sequence belongs to the universal ribosomal protein uS11 family. As to quaternary structure, part of the 30S ribosomal subunit.

The protein localises to the plastid. It is found in the chloroplast. The chain is Small ribosomal subunit protein uS11c from Lactuca sativa (Garden lettuce).